Here is a 449-residue protein sequence, read N- to C-terminus: Heterogeneous nuclear ribonucleoprotein H2 (449 aa).

Met-1 bears the N-acetylmethionine mark. At Met-2 the chain carries N-acetylmethionine; in Heterogeneous nuclear ribonucleoprotein H2, N-terminally processed. The RRM 1 domain occupies 11 to 90; the sequence is FVVKVRGLPW…RYVEVFKSNS (80 aa). The residue at position 23 (Ser-23) is a Phosphoserine. Lys-35 participates in a covalent cross-link: Glycyl lysine isopeptide (Lys-Gly) (interchain with G-Cter in SUMO2). Phosphoserine is present on residues Ser-54 and Ser-63. Lys-87 participates in a covalent cross-link: Glycyl lysine isopeptide (Lys-Gly) (interchain with G-Cter in SUMO2). Position 90 is a phosphoserine (Ser-90). Lys-98 participates in a covalent cross-link: Glycyl lysine isopeptide (Lys-Gly) (interchain with G-Cter in SUMO2). In terms of domain architecture, RRM 2 spans 111-188; the sequence is GFVRLRGLPF…RYIEIFKSSR (78 aa). Arg-233 bears the Dimethylated arginine; alternate mark. Arg-233 is modified (omega-N-methylarginine; alternate). A 1-1 repeat occupies 234–249; sequence GAYGGGYGGYDDYGGY. The tract at residues 234–433 is 2 X 16 AA Gly-rich approximate repeats; it reads GAYGGGYGGY…YGGQSSMSGY (200 aa). Position 246 is a phosphotyrosine (Tyr-246). Positions 289–364 constitute an RRM 3 domain; it reads HCVHMRGLPY…RYVELFLNST (76 aa). Ser-310 carries the post-translational modification Phosphoserine. 3 consecutive repeat copies span residues 354 to 372, 374 to 392, and 418 to 433. The interval 354 to 392 is 2 X 19 AA perfect repeats; sequence HRYVELFLNSTAGTSGGAYDHSYVELFLNSTAGASGGAY.

As to quaternary structure, component of a ribonucleoprotein complex containing mRNAs and RNA-binding proteins including DDX5, HNRNPH2 and SRSF1 as well as splicing regulator ARVCF. Interacts with TXNL4/DIM1.

The protein resides in the nucleus. It localises to the nucleoplasm. Functionally, this protein is a component of the heterogeneous nuclear ribonucleoprotein (hnRNP) complexes which provide the substrate for the processing events that pre-mRNAs undergo before becoming functional, translatable mRNAs in the cytoplasm. Binds poly(RG). This is Heterogeneous nuclear ribonucleoprotein H2 (HNRNPH2) from Bos taurus (Bovine).